Here is a 226-residue protein sequence, read N- to C-terminus: Beta-phosphoglucomutase (226 aa).

Catalysis depends on aspartate 7, which acts as the Nucleophile. Positions 7 and 9 each coordinate Mg(2+). Aspartate 7 carries the post-translational modification 4-aspartylphosphate. The active-site Proton donor/acceptor is aspartate 9. Residues aspartate 9, glycine 44, isoleucine 45, arginine 47, serine 116, arginine 117, and asparagine 118 each contribute to the beta-D-glucose 6-phosphate site. Aspartate 170 lines the Mg(2+) pocket.

The protein belongs to the HAD-like hydrolase superfamily. CbbY/CbbZ/Gph/YieH family. In terms of assembly, homodimer. Requires Mg(2+) as cofactor. Post-translationally, autophosphorylated.

The protein resides in the cytoplasm. The catalysed reaction is beta-D-glucose 1-phosphate = beta-D-glucose 6-phosphate. Its function is as follows. Catalyzes the interconversion of D-glucose 1-phosphate (G1P) and D-glucose 6-phosphate (G6P), forming beta-D-glucose 1,6-(bis)phosphate (beta-G16P) as an intermediate. This chain is Beta-phosphoglucomutase (yvdM), found in Bacillus subtilis (strain 168).